A 678-amino-acid polypeptide reads, in one-letter code: ATP-dependent RNA helicase DHX58 (678 aa).

The 178-residue stretch at 11 to 188 folds into the Helicase ATP-binding domain; sequence IMPALEGKNI…DGAINHVLQL (178 aa). Residue 24-31 coordinates ATP; that stretch reads LPTGAGKT. The short motif at 131-134 is the DECH box element; the sequence is DECH. Positions 350–514 constitute a Helicase C-terminal domain; the sequence is KLEMLEKILQ…QAVAAVQKMD (165 aa). The stretch at 489–546 forms a coiled coil; that stretch reads ELKRELINEALETLMEQAVAAVQKMDQAEYQAKIRDLQQAALTKRAAQAAQRENQRQQ. The RLR CTR domain maps to 539 to 669; that stretch reads QRENQRQQFP…PDFDFLQHCA (131 aa). Zn(2+) contacts are provided by cysteine 556, cysteine 559, cysteine 612, and cysteine 615. Positions 572-655 are RNA-binding; that stretch reads VEGTHHVNVN…RIQAKKWSRV (84 aa).

This sequence belongs to the helicase family. RLR subfamily. Monomer in the absence of dsRNA. Homodimer in the presence of dsRNA. Interacts with RIGI (via CARD domain), MAVS/IPS1 and DDX60. Found in a complex with RIGI and IFIH1/MDA5. Interacts with ANKRD17. Directly interacts with ATG5 and ATG12, either as ATG5 and ATG12 monomers or as ATG12-ATG5 conjugates. In terms of assembly, (Microbial infection) Interacts (via helicase C-terminal domain) with non-structural protein V of paramyxoviruses including human parainfluenza 2 virus, human parainfluenza 5 virus, measles virus, mumps virus, hendra virus and nipah virus. Expressed in testis, nerve and spleen. Also expressed in the brain.

The protein resides in the cytoplasm. It carries out the reaction ATP + H2O = ADP + phosphate + H(+). In terms of biological role, acts as a regulator of RIGI and IFIH1/MDA5 mediated antiviral signaling. Cannot initiate antiviral signaling as it lacks the CARD domain required for activating MAVS/IPS1-dependent signaling events. Can have both negative and positive regulatory functions related to RIGI and IFIH1/MDA5 signaling and this role in regulating signaling may be complex and could probably depend on characteristics of the infecting virus or target cells, or both. Its inhibitory action on RIG-I signaling may involve the following mechanisms: competition with RIGI for binding to the viral RNA, binding to RIGI and inhibiting its dimerization and interaction with MAVS/IPS1, competing with IKBKE in its binding to MAVS/IPS1 thereby inhibiting activation of interferon regulatory factor 3 (IRF3). Its positive regulatory role may involve unwinding or stripping nucleoproteins of viral RNA thereby facilitating their recognition by RIGI and IFIH1/MDA5. Involved in the innate immune response to various RNA viruses and some DNA viruses such as poxviruses and coronavirus SARS-CoV-2, and also to the bacterial pathogen Listeria monocytogenes. Can bind both ssRNA and dsRNA, with a higher affinity for dsRNA. Shows a preference to 5'-triphosphorylated RNA, although it can recognize RNA lacking a 5'-triphosphate. In Homo sapiens (Human), this protein is ATP-dependent RNA helicase DHX58.